Reading from the N-terminus, the 112-residue chain is Small ribosomal subunit protein bS6 (112 aa).

It belongs to the bacterial ribosomal protein bS6 family.

Functionally, binds together with bS18 to 16S ribosomal RNA. This chain is Small ribosomal subunit protein bS6 (rpsF), found in Chlamydia muridarum (strain MoPn / Nigg).